The primary structure comprises 367 residues: DNA replication and repair protein RecF (367 aa).

An ATP-binding site is contributed by 30-37; the sequence is GANGSGKT.

It belongs to the RecF family.

Its subcellular location is the cytoplasm. In terms of biological role, the RecF protein is involved in DNA metabolism; it is required for DNA replication and normal SOS inducibility. RecF binds preferentially to single-stranded, linear DNA. It also seems to bind ATP. This chain is DNA replication and repair protein RecF, found in Pseudomonas savastanoi pv. phaseolicola (strain 1448A / Race 6) (Pseudomonas syringae pv. phaseolicola (strain 1448A / Race 6)).